A 192-amino-acid chain; its full sequence is Orotate phosphoribosyltransferase (192 aa).

116-124 (EDIVTTGLS) is a binding site for 5-phospho-alpha-D-ribose 1-diphosphate. Orotate-binding residues include Thr-120 and Arg-148.

The protein belongs to the purine/pyrimidine phosphoribosyltransferase family. PyrE subfamily. As to quaternary structure, homodimer. Requires Mg(2+) as cofactor.

The enzyme catalyses orotidine 5'-phosphate + diphosphate = orotate + 5-phospho-alpha-D-ribose 1-diphosphate. Its pathway is pyrimidine metabolism; UMP biosynthesis via de novo pathway; UMP from orotate: step 1/2. In terms of biological role, catalyzes the transfer of a ribosyl phosphate group from 5-phosphoribose 1-diphosphate to orotate, leading to the formation of orotidine monophosphate (OMP). In Brucella abortus (strain S19), this protein is Orotate phosphoribosyltransferase.